Here is a 343-residue protein sequence, read N- to C-terminus: Thioredoxin domain-containing protein 15 (343 aa).

Positions 1–20 are cleaved as a signal peptide; the sequence is MQLLCWWQILLWVLGLPARG. The Extracellular segment spans residues 21–304; sequence LEEDSGHTWQ…GPLPSTLVKT (284 aa). Residues 86-95 are compositionally biased toward basic and acidic residues; that stretch reads EDQRSTEAHD. The tract at residues 86–112 is disordered; that stretch reads EDQRSTEAHDGTCSAQGDEDPRCGGRE. The Thioredoxin domain maps to 162–279; that stretch reads ERNVTGLENF…LKIFIFNQTG (118 aa). Residues Asn-170, Asn-177, Asn-189, and Asn-276 are each glycosylated (N-linked (GlcNAc...) asparagine). The chain crosses the membrane as a helical span at residues 305–325; it reads VDWLLVFSLFFLISFIMYATI. Topologically, residues 326 to 343 are cytoplasmic; sequence RTESIRWLIPGQEQEHAE.

The protein resides in the cell projection. Its subcellular location is the cilium membrane. Its function is as follows. Acts as a positive regulator of ciliary hedgehog signaling. Required for cilia biogenesis. The chain is Thioredoxin domain-containing protein 15 (Txndc15) from Rattus norvegicus (Rat).